We begin with the raw amino-acid sequence, 606 residues long: Zinc finger protein 214 (606 aa).

The 81-residue stretch at 3 to 83 (VTFEDVTIIF…GAQMYENQNY (81 aa)) folds into the KRAB domain. The segment at 275–297 (YGCDEVDGNFHQSSGVHFHQRVH) adopts a C2H2-type 1; degenerate zinc-finger fold. The segment at 303–325 (YSCNACGKSFSQISSLHNHQRVH) adopts a C2H2-type 2 zinc-finger fold. Residues 330–352 (FYKIECDKDLSRNSLLHIHQRLH) form a C2H2-type 3; degenerate zinc finger. C2H2-type zinc fingers lie at residues 358–380 (FKCN…QRVH), 386–408 (YKCD…QLVH), 414–436 (YKCE…QRVH), 442–464 (YKCD…QRVH), 470–492 (YTCP…QRVH), 498–520 (YKCE…QRVH), 526–548 (YKCH…QRVH), and 554–576 (YQCA…QRVH).

This sequence belongs to the krueppel C2H2-type zinc-finger protein family.

The protein resides in the nucleus. May be involved in transcriptional regulation. The chain is Zinc finger protein 214 (ZNF214) from Homo sapiens (Human).